Here is a 223-residue protein sequence, read N- to C-terminus: Transcriptional regulator HMO1 (223 aa).

2 disordered regions span residues 69-89 and 165-223; these read IEAT…APKK and DGSA…HGSP. Residues 70-86 show a composition bias toward basic and acidic residues; the sequence is EATESKKKRKQEKDPNA. A DNA-binding region (HMG box) is located at residues 87-160; that stretch reads PKKPLTMFFQ…IYNIEKKKYE (74 aa). The span at 204–223 shows a compositional bias: basic residues; sequence KKKKKTEKKEKKKKSGHGSP.

It is found in the nucleus. Its function is as follows. Transcription factor that binds upstream of hexose and ergosterol metabolism, as well as cell cycle genes. Activates pseudohyphal growth. This Candida albicans (strain SC5314 / ATCC MYA-2876) (Yeast) protein is Transcriptional regulator HMO1 (HMO1).